Consider the following 349-residue polypeptide: Probable ethanolamine kinase (349 aa).

This sequence belongs to the choline/ethanolamine kinase family.

The protein resides in the cytoplasm. It carries out the reaction ethanolamine + ATP = phosphoethanolamine + ADP + H(+). It participates in phospholipid metabolism; phosphatidylethanolamine biosynthesis; phosphatidylethanolamine from ethanolamine: step 1/3. Functionally, highly specific for ethanolamine phosphorylation. May be a rate-controlling step in phosphatidylethanolamine biosynthesis. In Nematostella vectensis (Starlet sea anemone), this protein is Probable ethanolamine kinase (etnk).